A 118-amino-acid polypeptide reads, in one-letter code: Large ribosomal subunit protein uL24 (118 aa).

This sequence belongs to the universal ribosomal protein uL24 family. Part of the 50S ribosomal subunit.

Its function is as follows. One of two assembly initiator proteins, it binds directly to the 5'-end of the 23S rRNA, where it nucleates assembly of the 50S subunit. Functionally, one of the proteins that surrounds the polypeptide exit tunnel on the outside of the subunit. The protein is Large ribosomal subunit protein uL24 of Prochlorococcus marinus (strain MIT 9301).